The following is a 669-amino-acid chain: Cytokinesis protein 2 (669 aa).

An F-BAR domain is found at 1–261 (MSYSYEACFW…HLNSFTAADE (261 aa)). Residues 134–200 (KKGCEVLQKK…LKQEYKASQK (67 aa)) adopt a coiled-coil conformation. A phosphoserine mark is found at Ser-337 and Ser-366. The tract at residues 372 to 518 (VQLQSNVDDS…DYNTRRDTST (147 aa)) is disordered. Composition is skewed to basic and acidic residues over residues 381–391 (SVLRQKPDKPR) and 397–413 (EQLK…EKGL). Ser-421 is subject to Phosphoserine. 2 stretches are compositionally biased toward low complexity: residues 421–431 (SLSSPSESSSS) and 445–455 (MESMTTSVSSM). The 69-residue stretch at 599–667 (PVIEYAKAMY…PYNFIQLLHQ (69 aa)) folds into the SH3 domain.

Interacts with INN1.

It localises to the cytoplasm. The protein resides in the cytoskeleton. It is found in the bud neck. Throughout most of the cell cycle it forms a double ring that coincides with the septins. After the onset of mitosis, forms a ring-like structure which colocalizes with the medial actin ring. Mediates cytoskeletal rearrangements required for cytokinesis. In conjunction with the medial actin ring exhibits contraction-like action. The polypeptide is Cytokinesis protein 2 (HOF1) (Saccharomyces cerevisiae (strain ATCC 204508 / S288c) (Baker's yeast)).